A 74-amino-acid polypeptide reads, in one-letter code: uncharacterized protein (74 aa).

Positions 1–25 are cleaved as a signal peptide; sequence MMMTDLPENIRKTAVALLRLGEATA.

This is an uncharacterized protein from Archaeoglobus fulgidus (strain ATCC 49558 / DSM 4304 / JCM 9628 / NBRC 100126 / VC-16).